A 335-amino-acid chain; its full sequence is Probable peptide ABC transporter ATP-binding protein y4tR (335 aa).

The region spanning valine 15–methionine 264 is the ABC transporter domain. Glycine 49–serine 56 contacts ATP.

It belongs to the ABC transporter superfamily.

It is found in the cell inner membrane. In terms of biological role, probably part of a binding-protein-dependent transport system y4tOPQRS for a peptide. Probably responsible for energy coupling to the transport system. In Sinorhizobium fredii (strain NBRC 101917 / NGR234), this protein is Probable peptide ABC transporter ATP-binding protein y4tR.